The chain runs to 438 residues: UDP-N-acetylmuramoylalanine--D-glutamate ligase (438 aa).

An ATP-binding site is contributed by 112-118; sequence GSNGKST.

The protein belongs to the MurCDEF family.

It localises to the cytoplasm. The catalysed reaction is UDP-N-acetyl-alpha-D-muramoyl-L-alanine + D-glutamate + ATP = UDP-N-acetyl-alpha-D-muramoyl-L-alanyl-D-glutamate + ADP + phosphate + H(+). It participates in cell wall biogenesis; peptidoglycan biosynthesis. In terms of biological role, cell wall formation. Catalyzes the addition of glutamate to the nucleotide precursor UDP-N-acetylmuramoyl-L-alanine (UMA). The sequence is that of UDP-N-acetylmuramoylalanine--D-glutamate ligase from Yersinia pseudotuberculosis serotype I (strain IP32953).